We begin with the raw amino-acid sequence, 129 residues long: UPF0344 protein USA300HOU_0928 (129 aa).

The next 4 membrane-spanning stretches (helical) occupy residues Met1–Leu21, Leu36–Ile56, Met67–Ile87, and Met99–Leu119.

The protein belongs to the UPF0344 family.

The protein localises to the cell membrane. This is UPF0344 protein USA300HOU_0928 from Staphylococcus aureus (strain USA300 / TCH1516).